The chain runs to 466 residues: Soluble pyridine nucleotide transhydrogenase (466 aa).

36–45 is an FAD binding site; sequence ERYQNVGGGC.

It belongs to the class-I pyridine nucleotide-disulfide oxidoreductase family. FAD serves as cofactor.

Its subcellular location is the cytoplasm. It carries out the reaction NAD(+) + NADPH = NADH + NADP(+). Its function is as follows. Conversion of NADPH, generated by peripheral catabolic pathways, to NADH, which can enter the respiratory chain for energy generation. In Escherichia fergusonii (strain ATCC 35469 / DSM 13698 / CCUG 18766 / IAM 14443 / JCM 21226 / LMG 7866 / NBRC 102419 / NCTC 12128 / CDC 0568-73), this protein is Soluble pyridine nucleotide transhydrogenase.